The sequence spans 315 residues: tRNA-dihydrouridine(16) synthase (315 aa).

FMN contacts are provided by residues 7–9 and glutamine 68; that span reads PME. Residue cysteine 98 is the Proton donor of the active site. FMN is bound by residues lysine 139, 200–202, and 224–225; these read NGE and GR.

Belongs to the Dus family. DusC subfamily. The cofactor is FMN.

It catalyses the reaction 5,6-dihydrouridine(16) in tRNA + NADP(+) = uridine(16) in tRNA + NADPH + H(+). The enzyme catalyses 5,6-dihydrouridine(16) in tRNA + NAD(+) = uridine(16) in tRNA + NADH + H(+). In terms of biological role, catalyzes the synthesis of 5,6-dihydrouridine (D), a modified base found in the D-loop of most tRNAs, via the reduction of the C5-C6 double bond in target uridines. Specifically modifies U16 in tRNAs. The polypeptide is tRNA-dihydrouridine(16) synthase (Shigella flexneri).